Reading from the N-terminus, the 214-residue chain is Pyridoxine/pyridoxamine 5'-phosphate oxidase (214 aa).

Residues 9 to 12 (RKDY) and Lys-67 contribute to the substrate site. Residues 62 to 67 (RMVLLK), 77 to 78 (FT), Arg-83, Lys-84, and Gln-106 each bind FMN. Substrate-binding residues include Tyr-124, Arg-128, and Ser-132. FMN contacts are provided by residues 141–142 (QS) and Trp-186. Residue 192–194 (RLH) coordinates substrate. Arg-196 is a binding site for FMN.

This sequence belongs to the pyridoxamine 5'-phosphate oxidase family. As to quaternary structure, homodimer. Requires FMN as cofactor.

It carries out the reaction pyridoxamine 5'-phosphate + O2 + H2O = pyridoxal 5'-phosphate + H2O2 + NH4(+). The catalysed reaction is pyridoxine 5'-phosphate + O2 = pyridoxal 5'-phosphate + H2O2. Its pathway is cofactor metabolism; pyridoxal 5'-phosphate salvage; pyridoxal 5'-phosphate from pyridoxamine 5'-phosphate: step 1/1. It participates in cofactor metabolism; pyridoxal 5'-phosphate salvage; pyridoxal 5'-phosphate from pyridoxine 5'-phosphate: step 1/1. Its function is as follows. Catalyzes the oxidation of either pyridoxine 5'-phosphate (PNP) or pyridoxamine 5'-phosphate (PMP) into pyridoxal 5'-phosphate (PLP). The protein is Pyridoxine/pyridoxamine 5'-phosphate oxidase of Trichormus variabilis (strain ATCC 29413 / PCC 7937) (Anabaena variabilis).